The sequence spans 194 residues: Putative manganese efflux pump MntP (194 aa).

6 helical membrane-spanning segments follow: residues 3 to 23, 37 to 57, 69 to 89, 110 to 132, 147 to 167, and 172 to 192; these read PFSI…AAIG, LRAG…GWVL, DHWI…IAGL, LGLA…SLAF, CTFS…NLIG, and ILGG…HLGA.

The protein belongs to the MntP (TC 9.B.29) family.

It is found in the cell inner membrane. Functionally, probably functions as a manganese efflux pump. The chain is Putative manganese efflux pump MntP from Xanthomonas oryzae pv. oryzae (strain MAFF 311018).